The chain runs to 253 residues: Chloride intracellular channel protein 4 (253 aa).

Residue A2 is modified to N-acetylalanine. The required for insertion into the membrane stretch occupies residues 2 to 101 (ALSMPLNGLK…EEFLEEVLCP (100 aa)). The residue at position 4 (S4) is a Phosphoserine. N6-acetyllysine is present on K24. The short motif at 35–38 (CPFS) is the G-site element. Residues 37–57 (FSQRLFMILWLKGVVFSVTTV) traverse the membrane as a helical segment. One can recognise a GST C-terminal domain in the interval 81–244 (NSEVKTDVNK…PSDKEVEIAY (164 aa)). Position 130 is an N6-acetyllysine (K130). S132, S167, and S236 each carry phosphoserine. Position 244 is a phosphotyrosine (Y244).

The protein belongs to the chloride channel CLIC family. In terms of assembly, monomer. Interacts with HRH3. Detected in brain, in cell bodies and dendrites of Purkinje cells in cerebellar neurons (at protein level). Expressed neonatal and adult cardiomyocytes (at protein level). Marked expression was found in hippocampus and cerebellum, and in many other tissues.

Its subcellular location is the cytoplasm. It localises to the cytoskeleton. The protein resides in the microtubule organizing center. It is found in the centrosome. The protein localises to the cytoplasmic vesicle membrane. Its subcellular location is the nucleus. It localises to the cell membrane. The protein resides in the mitochondrion. It is found in the cell junction. The protein localises to the endoplasmic reticulum membrane. It carries out the reaction chloride(in) = chloride(out). The enzyme catalyses thiocyanate(in) = thiocyanate(out). The catalysed reaction is nitrate(in) = nitrate(out). It catalyses the reaction iodide(out) = iodide(in). It carries out the reaction bromide(in) = bromide(out). The enzyme catalyses fluoride(in) = fluoride(out). The catalysed reaction is choline(out) = choline(in). Its activity is regulated as follows. Channel activity is redox- and pH-regulated. Anion vs cation selectivity is enhanced when fully oxidized. Functionally, in the soluble state, catalyzes glutaredoxin-like thiol disulfide exchange reactions with reduced glutathione as electron donor. Can insert into membranes and form voltage-dependent multi-ion conductive channels. Membrane insertion seems to be redox-regulated and may occur only under oxidizing conditions. Has alternate cellular functions like a potential role in angiogenesis or in maintaining apical-basolateral membrane polarity during mitosis and cytokinesis. Could also promote endothelial cell proliferation and regulate endothelial morphogenesis (tubulogenesis). Promotes cell-surface expression of HRH3. The protein is Chloride intracellular channel protein 4 (Clic4) of Rattus norvegicus (Rat).